The sequence spans 191 residues: Inosine triphosphate pyrophosphatase (191 aa).

Residue 9 to 14 (TGNAKK) coordinates ITP. Position 39 (glutamate 39) interacts with Mg(2+). ITP-binding positions include lysine 51, 67–68 (DT), lysine 84, 143–146 (FGWD), lysine 166, and 171–172 (HR).

The protein belongs to the HAM1 NTPase family. Homodimer. The cofactor is Mg(2+). Mn(2+) serves as cofactor.

The protein localises to the cytoplasm. It catalyses the reaction ITP + H2O = IMP + diphosphate + H(+). The catalysed reaction is dITP + H2O = dIMP + diphosphate + H(+). The enzyme catalyses XTP + H2O = XMP + diphosphate + H(+). In terms of biological role, pyrophosphatase that hydrolyzes non-canonical purine nucleotides such as inosine triphosphate (ITP), deoxyinosine triphosphate (dITP) or xanthosine 5'-triphosphate (XTP) to their respective monophosphate derivatives. The enzyme does not distinguish between the deoxy- and ribose forms. Probably excludes non-canonical purines from RNA and DNA precursor pools, thus preventing their incorporation into RNA and DNA and avoiding chromosomal lesions. In Drosophila melanogaster (Fruit fly), this protein is Inosine triphosphate pyrophosphatase.